Here is an 860-residue protein sequence, read N- to C-terminus: Late endosome and vacuole interface protein 11 (860 aa).

Positions 19–45 (EIINNSDHSSSHSTSHEEEDEEEDDTE) are disordered. Positions 20–31 (IINNSDHSSSHS) are enriched in low complexity. The segment covering 35-45 (EEEDEEEDDTE) has biased composition (acidic residues). The BED-type zinc finger occupies 84 to 138 (KNIAKFWSHFLAIEKKLTKVKCKHCGEILTRSDASLTKTFRSHLKTKHNISANKN). Zn(2+) is bound by residues cysteine 105, cysteine 108, histidine 126, and histidine 131.

Belongs to the VID22 family.

Its subcellular location is the nucleus. In terms of biological role, involved in vacuolar processing and morphology. This is Late endosome and vacuole interface protein 11 (ENV11) from Saccharomyces cerevisiae (strain ATCC 204508 / S288c) (Baker's yeast).